The following is a 160-amino-acid chain: SsrA-binding protein (160 aa).

The protein belongs to the SmpB family.

Its subcellular location is the cytoplasm. Functionally, required for rescue of stalled ribosomes mediated by trans-translation. Binds to transfer-messenger RNA (tmRNA), required for stable association of tmRNA with ribosomes. tmRNA and SmpB together mimic tRNA shape, replacing the anticodon stem-loop with SmpB. tmRNA is encoded by the ssrA gene; the 2 termini fold to resemble tRNA(Ala) and it encodes a 'tag peptide', a short internal open reading frame. During trans-translation Ala-aminoacylated tmRNA acts like a tRNA, entering the A-site of stalled ribosomes, displacing the stalled mRNA. The ribosome then switches to translate the ORF on the tmRNA; the nascent peptide is terminated with the 'tag peptide' encoded by the tmRNA and targeted for degradation. The ribosome is freed to recommence translation, which seems to be the essential function of trans-translation. The sequence is that of SsrA-binding protein from Salmonella arizonae (strain ATCC BAA-731 / CDC346-86 / RSK2980).